Reading from the N-terminus, the 132-residue chain is ATP synthase epsilon chain, chloroplastic (132 aa).

Belongs to the ATPase epsilon chain family. In terms of assembly, F-type ATPases have 2 components, CF(1) - the catalytic core - and CF(0) - the membrane proton channel. CF(1) has five subunits: alpha(3), beta(3), gamma(1), delta(1), epsilon(1). CF(0) has three main subunits: a, b and c.

The protein resides in the plastid. It is found in the chloroplast thylakoid membrane. In terms of biological role, produces ATP from ADP in the presence of a proton gradient across the membrane. The polypeptide is ATP synthase epsilon chain, chloroplastic (Coffea arabica (Arabian coffee)).